The primary structure comprises 399 residues: L-methionine gamma-lyase (399 aa).

Residues 59–61 and 89–90 contribute to the pyridoxal 5'-phosphate site; these read YTR and GM. Tyr114 serves as a coordination point for substrate. 209-211 is a pyridoxal 5'-phosphate binding site; that stretch reads SAT. N6-(pyridoxal phosphate)lysine is present on Lys212. Residue Arg376 coordinates substrate.

The protein belongs to the trans-sulfuration enzymes family. L-methionine gamma-lyase subfamily. As to quaternary structure, homotetramer; dimer of active dimers. Requires pyridoxal 5'-phosphate as cofactor.

The enzyme catalyses L-methionine + H2O = methanethiol + 2-oxobutanoate + NH4(+). Functionally, catalyzes the alpha,gamma-elimination of L-methionine to produce methanethiol, 2-oxobutanoate and ammonia. The polypeptide is L-methionine gamma-lyase (Pseudomonas deceptionensis).